Reading from the N-terminus, the 945-residue chain is Splicing factor, suppressor of white-apricot homolog (945 aa).

2 disordered regions span residues 1-28 and 156-185; these read MYGA…GTGT and DYYD…EENE. Composition is skewed to basic and acidic residues over residues 9-21 and 169-178; these read AKPE…KEEA and PSKQREKNEA. Residues 211-253 form an SURP motif 1 repeat; that stretch reads IIERTANFVCKQGAQFEIMLKAKQARNSQFDFLRFDHYLNPYY. The disordered stretch occupies residues 271–301; it reads SKNEEKKKSGPTSDNEEEDDEEDGSYLHPSL. Ser283 carries the phosphoserine modification. Over residues 284-294 the composition is skewed to acidic residues; the sequence is DNEEEDDEEDG. Residue Lys315 is modified to N6-acetyllysine. 2 disordered regions span residues 332 to 355 and 403 to 448; these read KAQA…PSQV and SSSP…PVAI. Positions 335-352 are enriched in low complexity; the sequence is ADSSAPAPPTADGTPAQP. Over residues 412 to 426 the composition is skewed to pro residues; the sequence is VPPPPGTTPPPPPTT. The segment covering 427 to 447 has biased composition (low complexity); it reads AEPSSGVTSTTTTTSALAPVA. Residues 458 to 498 form an SURP motif 2 repeat; it reads VIDKLAEYVARNGLKFETSVRAKNDQRFEFLQPWHQYNAYY. Disordered regions lie at residues 512 to 564, 589 to 680, and 712 to 921; these read GSTQ…KSTV, PLEK…QAER, and DTGV…VQSK. Residues 514 to 527 show a composition bias toward low complexity; it reads TQAASTAEEAPTET. Residues 528 to 540 are compositionally biased toward acidic residues; the sequence is AVEESGEAGEDGA. Residues 589–598 are compositionally biased toward basic and acidic residues; sequence PLEKNRVKLD. Residues Ser601 and Ser621 each carry the phosphoserine modification. A compositionally biased stretch (low complexity) spans 615 to 630; sequence SSVANPSPAAAPPSVA. Positions 632 to 686 form a coiled coil; the sequence is EEKKPQLTQEELEAKQAKQKLEDRLAAAAREKLAQASKESKEKQLQAERKRKAAL. At Thr639 the chain carries Phosphothreonine. Basic and acidic residues-rich tracts occupy residues 643-679 and 733-752; these read LEAK…LQAE and KPPE…EERE. 2 stretches are compositionally biased toward basic residues: residues 753-787 and 795-810; these read KKKK…KAKH and TVRR…RRRA. The span at 811-821 shows a compositional bias: basic and acidic residues; it reads HSPERRREERS. A phosphoserine mark is found at Ser829 and Ser831. Positions 835 to 861 are enriched in basic residues; sequence SRKRTRSRSPHEKKKKRRSRSRTKAKA. The span at 871–894 shows a compositional bias: low complexity; sequence QAAQRPSAHSAHSASISPVESRGS. The segment covering 895–908 has biased composition (basic and acidic residues); the sequence is SQERSRGVSQEKDG. Phosphoserine occurs at positions 899 and 903. A compositionally biased stretch (low complexity) spans 909-920; it reads QISSAIVSSVQS.

It is found in the nucleus. Its function is as follows. Plays a role as an alternative splicing regulator. Regulates its own expression at the level of RNA processing. Also regulates the splicing of fibronectin and CD45 genes. May act, at least in part, by interaction with other R/S-containing splicing factors. Represses the splicing of MAPT/Tau exon 10. This chain is Splicing factor, suppressor of white-apricot homolog (Sfswap), found in Mus musculus (Mouse).